A 253-amino-acid chain; its full sequence is Small ribosomal subunit protein uS2 (253 aa).

It belongs to the universal ribosomal protein uS2 family.

This chain is Small ribosomal subunit protein uS2, found in Parvibaculum lavamentivorans (strain DS-1 / DSM 13023 / NCIMB 13966).